Here is a 638-residue protein sequence, read N- to C-terminus: Sodium- and chloride-dependent neutral and basic amino acid transporter B(0+) (638 aa).

The Cytoplasmic portion of the chain corresponds to 1–44; it reads MDRLKCPNFFKCRQKEKVTASSENFHVGENDENQERGNWSKKSD. 3 helical membrane passes run 45–65, 72–92, and 110–130; these read YLLS…FPYL, GAFL…LFFL, and ILPL…FVAI. At 131–230 the chain is on the extracellular side; it reads YYNVIIAYSL…RSSGMDETGV (100 aa). N-linked (GlcNAc...) asparagine glycosylation is found at Asn-155, Asn-163, Asn-174, Asn-185, Asn-193, and Asn-198. 2 helical membrane-spanning segments follow: residues 231-251 and 257-277; these read VVWY…AALF and SGKV…ILLI. A glycan (N-linked (GlcNAc...) asparagine) is linked at Asn-298. The next 7 membrane-spanning stretches (helical) occupy residues 311–331, 344–364, 395–415, 453–473, 476–496, 524–544, and 559–579; these read AATQ…ALSS, IIVC…IFSI, LAQL…LLTL, ILFL…VHLI, FCAG…IIWI, CWFV…LVKF, and VALG…MAII. Topologically, residues 580–638 are cytoplasmic; that stretch reads KIVQAEGNILQRIISCCRPASNWGPYLEKHRGERYRDMAEPAKETDHEIPTISGSTKPE. The segment covering 618–628 has biased composition (basic and acidic residues); that stretch reads AEPAKETDHEI. The disordered stretch occupies residues 618-638; it reads AEPAKETDHEIPTISGSTKPE.

The protein belongs to the sodium:neurotransmitter symporter (SNF) (TC 2.A.22) family. SLC6A14 subfamily. As to expression, expressed in the distal region of the intestinal tract: cecum and colon.

Its subcellular location is the membrane. It localises to the apical cell membrane. The catalysed reaction is glycine(out) + chloride(out) + 2 Na(+)(out) = glycine(in) + chloride(in) + 2 Na(+)(in). It catalyses the reaction L-leucine(out) + chloride(out) + 2 Na(+)(out) = L-leucine(in) + chloride(in) + 2 Na(+)(in). The enzyme catalyses L-glutamine(out) + chloride(out) + 2 Na(+)(out) = L-glutamine(in) + chloride(in) + 2 Na(+)(in). It carries out the reaction L-arginine(out) + chloride(out) + 2 Na(+)(out) = L-arginine(in) + chloride(in) + 2 Na(+)(in). The catalysed reaction is (R)-carnitine(out) + chloride(out) + 2 Na(+)(out) = (R)-carnitine(in) + chloride(in) + 2 Na(+)(in). It catalyses the reaction O-propanoyl-(R)-carnitine(out) + chloride(out) + 2 Na(+)(out) = O-propanoyl-(R)-carnitine(in) + chloride(in) + 2 Na(+)(in). The enzyme catalyses L-isoleucine(out) + chloride(out) + 2 Na(+)(out) = L-isoleucine(in) + chloride(in) + 2 Na(+)(in). It carries out the reaction L-methionine(out) + chloride(out) + 2 Na(+)(out) = L-methionine(in) + chloride(in) + 2 Na(+)(in). The catalysed reaction is L-valine(out) + chloride(out) + 2 Na(+)(out) = L-valine(in) + chloride(in) + 2 Na(+)(in). It catalyses the reaction L-alanine(out) + chloride(out) + 2 Na(+)(out) = L-alanine(in) + chloride(in) + 2 Na(+)(in). The enzyme catalyses L-serine(out) + chloride(out) + 2 Na(+)(out) = L-serine(in) + chloride(in) + 2 Na(+)(in). It carries out the reaction L-cysteine(out) + chloride(out) + 2 Na(+)(out) = L-cysteine(in) + chloride(in) + 2 Na(+)(in). The catalysed reaction is L-asparagine(out) + chloride(out) + 2 Na(+)(out) = L-asparagine(in) + chloride(in) + 2 Na(+)(in). It catalyses the reaction L-threonine(out) + chloride(out) + 2 Na(+)(out) = L-threonine(in) + chloride(in) + 2 Na(+)(in). The enzyme catalyses L-phenylalanine(out) + chloride(out) + 2 Na(+)(out) = L-phenylalanine(in) + chloride(in) + 2 Na(+)(in). It carries out the reaction L-tryptophan(out) + chloride(out) + 2 Na(+)(out) = L-tryptophan(in) + chloride(in) + 2 Na(+)(in). The catalysed reaction is L-tyrosine(out) + chloride(out) + 2 Na(+)(out) = L-tyrosine(in) + chloride(in) + 2 Na(+)(in). It catalyses the reaction L-histidine(out) + chloride(out) + 2 Na(+)(out) = L-histidine(in) + chloride(in) + 2 Na(+)(in). The enzyme catalyses L-lysine(out) + chloride(out) + 2 Na(+)(out) = L-lysine(in) + chloride(in) + 2 Na(+)(in). It carries out the reaction O-butanoyl-(R)-carnitine(out) + chloride(out) + 2 Na(+)(out) = O-butanoyl-(R)-carnitine(in) + chloride(in) + 2 Na(+)(in). Amino acid transporter that plays an important role in the absorption of amino acids in the intestinal tract. Mediates the uptake of a broad range of neutral and cationic amino acids (with the exception of proline) in a Na(+)/Cl(-)-dependent manner. Transports non-alpha-amino acids such as beta-alanine with low affinity, and has a higher affinity for dipolar and cationic amino acids such as leucine and lysine. Can also transport carnitine, butyrylcarnitine and propionylcarnitine coupled to the transmembrane gradients of Na(+) and Cl(-). This chain is Sodium- and chloride-dependent neutral and basic amino acid transporter B(0+), found in Mus musculus (Mouse).